Consider the following 468-residue polypeptide: Cell division protein FtsA (468 aa).

Positions Asn416–Glu468 are disordered. Positions Val425 to Gln434 are enriched in acidic residues. Positions Glu436–Phe459 are enriched in basic and acidic residues.

This sequence belongs to the FtsA/MreB family. As to quaternary structure, self-interacts. Interacts with FtsZ.

The protein resides in the cell membrane. In terms of biological role, cell division protein that is involved in the assembly of the Z ring. May serve as a membrane anchor for the Z ring. This chain is Cell division protein FtsA, found in Staphylococcus aureus (strain MRSA252).